Consider the following 77-residue polypeptide: ATP synthase subunit c (77 aa).

The next 2 membrane-spanning stretches (helical) occupy residues 7 to 27 (AFKY…AALG) and 57 to 77 (VGLI…ILFL).

This sequence belongs to the ATPase C chain family. F-type ATPases have 2 components, F(1) - the catalytic core - and F(0) - the membrane proton channel. F(1) has five subunits: alpha(3), beta(3), gamma(1), delta(1), epsilon(1). F(0) has three main subunits: a(1), b(2) and c(10-14). The alpha and beta chains form an alternating ring which encloses part of the gamma chain. F(1) is attached to F(0) by a central stalk formed by the gamma and epsilon chains, while a peripheral stalk is formed by the delta and b chains.

The protein resides in the cell membrane. F(1)F(0) ATP synthase produces ATP from ADP in the presence of a proton or sodium gradient. F-type ATPases consist of two structural domains, F(1) containing the extramembraneous catalytic core and F(0) containing the membrane proton channel, linked together by a central stalk and a peripheral stalk. During catalysis, ATP synthesis in the catalytic domain of F(1) is coupled via a rotary mechanism of the central stalk subunits to proton translocation. In terms of biological role, key component of the F(0) channel; it plays a direct role in translocation across the membrane. A homomeric c-ring of between 10-14 subunits forms the central stalk rotor element with the F(1) delta and epsilon subunits. The chain is ATP synthase subunit c from Lactobacillus helveticus (strain DPC 4571).